The sequence spans 393 residues: COP9 signalosome complex subunit 4 (393 aa).

One can recognise a PCI domain in the interval 197–362 (MFLKASLRYY…RLIQFENVGD (166 aa)).

This sequence belongs to the CSN4 family. As to quaternary structure, component of the CSN complex. The holocomplex is comprised of 8 subunits csn1-8. In the complex, it probably interacts directly with csn1, csn2, csn3, csn4, csn6 and csn8.

It is found in the cytoplasm. Its subcellular location is the nucleus. Its function is as follows. Component of the COP9 signalosome complex (CSN), a complex involved in various cellular and developmental processes. The CSN complex is an essential regulator of the ubiquitin (Ubl) conjugation pathway by mediating the deneddylation of the cullin subunits of E3 ligase complexes, leading to modify the Ubl ligase activity. This is COP9 signalosome complex subunit 4 (csn4) from Dictyostelium discoideum (Social amoeba).